A 312-amino-acid polypeptide reads, in one-letter code: Ornithine carbamoyltransferase (312 aa).

Carbamoyl phosphate-binding positions include 50-53, Gln77, Arg101, and 128-131; these read STRT and HPCQ. Residues Asn159, Asp223, and 227-228 contribute to the L-ornithine site; that span reads SM. Residues 263-264 and Arg291 each bind carbamoyl phosphate; that span reads CL.

It belongs to the aspartate/ornithine carbamoyltransferase superfamily. OTCase family.

The protein localises to the cytoplasm. The enzyme catalyses carbamoyl phosphate + L-ornithine = L-citrulline + phosphate + H(+). It participates in amino-acid biosynthesis; L-arginine biosynthesis; L-arginine from L-ornithine and carbamoyl phosphate: step 1/3. Its function is as follows. Reversibly catalyzes the transfer of the carbamoyl group from carbamoyl phosphate (CP) to the N(epsilon) atom of ornithine (ORN) to produce L-citrulline. This chain is Ornithine carbamoyltransferase, found in Acidothermus cellulolyticus (strain ATCC 43068 / DSM 8971 / 11B).